We begin with the raw amino-acid sequence, 492 residues long: Monocarboxylate transporter 3 (492 aa).

Topologically, residues 1-14 (MGAGGPRRGAGPPD) are cytoplasmic. A helical transmembrane segment spans residues 15–35 (GGWGWVVLGACFVVTGFAYGF). Residues 36–58 (PKAVSVFFRELKRDFGAGYSDTA) are Extracellular-facing. A helical transmembrane segment spans residues 59-79 (WVSSIMLAMLYGTGPLSSILV). The Cytoplasmic segment spans residues 80–85 (TRFGCR). The helical transmembrane segment at 86-106 (PVMLAGGLLASAGMILASFAS) threads the bilayer. Residues 107–115 (RLVELYLTA) are Extracellular-facing. Residues 116–136 (GVLTGLGLALNFQPSLIMLGL) form a helical membrane-spanning segment. Residues 137–146 (YFERRRPLAN) lie on the Cytoplasmic side of the membrane. The helical transmembrane segment at 147–167 (GLAAAGSPVFLSMLSPLGQLL) threads the bilayer. At 168–172 (GERFG) the chain is on the extracellular side. Residues 173–193 (WRGGFLLFGGLLLHCCACGAV) form a helical membrane-spanning segment. Residues 194–228 (MRPPPGPPPRRDPSPHGGPARRRRLLDVAVCTDRA) lie on the Cytoplasmic side of the membrane. Residues 229–249 (FVVYVVTKFLMALGLFVPAIL) form a helical membrane-spanning segment. Residues 250–257 (LVNYAKDA) lie on the Extracellular side of the membrane. The chain crosses the membrane as a helical span at residues 258-278 (GVPDAEAAFLLSIVGFVDIVA). Over 279–293 (RPACGALAGLGRLRP) the chain is Cytoplasmic. The chain crosses the membrane as a helical span at residues 294-314 (HVPYLFSLALLANGLTDLISA). The Extracellular portion of the chain corresponds to 315–318 (RARS). A helical membrane pass occupies residues 319 to 339 (YGTLVAFCIAFGLSYGMVGAL). At 340–352 (QFEVLMATVGAPR) the chain is on the cytoplasmic side. A helical transmembrane segment spans residues 353–373 (FPSALGLVLLVEAVAVLIGPP). Over 374–386 (SAGRLVDALKNYE) the chain is Extracellular. The helical transmembrane segment at 387–407 (IIFYLAGSEVALAGVFMAVTT) threads the bilayer. Over 408-492 (YCCLRCSKNI…GGHEARGQKA (85 aa)) the chain is Cytoplasmic. Residues 419–492 (SGRSAEGGAS…GGHEARGQKA (74 aa)) are disordered. Basolateral sorting signal stretches follow at residues 426 to 460 (GASD…VLSP) and 461 to 482 (RAGS…HESI). The span at 476–492 (ELDHESIGGHEARGQKA) shows a compositional bias: basic and acidic residues.

This sequence belongs to the major facilitator superfamily. Monocarboxylate porter (TC 2.A.1.13) family. In terms of tissue distribution, expressed exclusively in retinal pigment epithelium and choroid plexus epithelium.

The protein localises to the basolateral cell membrane. It carries out the reaction (S)-lactate(in) + H(+)(in) = (S)-lactate(out) + H(+)(out). Probable retinal pigment epithelium (RPE)-specific proton-coupled L-lactate transporter. May facilitate transport of lactate and H(+) out of the retina and could therefore play an essential role in maintenance of metabolic and ionic homeostasis of the outer retina. The polypeptide is Monocarboxylate transporter 3 (Slc16a8) (Mus musculus (Mouse)).